The sequence spans 595 residues: Aspartate--tRNA(Asp/Asn) ligase (595 aa).

L-aspartate is bound at residue glutamate 177. An aspartate region spans residues glutamine 201–lysine 204. Residue arginine 223 coordinates L-aspartate. ATP-binding positions include arginine 223–glutamate 225 and glutamine 232. Histidine 455 is an L-aspartate binding site. Glutamate 489 is an ATP binding site. Arginine 496 lines the L-aspartate pocket. ATP is bound at residue glycine 542–arginine 545.

Belongs to the class-II aminoacyl-tRNA synthetase family. Type 1 subfamily. Homodimer.

The protein resides in the cytoplasm. The enzyme catalyses tRNA(Asx) + L-aspartate + ATP = L-aspartyl-tRNA(Asx) + AMP + diphosphate. Its function is as follows. Aspartyl-tRNA synthetase with relaxed tRNA specificity since it is able to aspartylate not only its cognate tRNA(Asp) but also tRNA(Asn). Reaction proceeds in two steps: L-aspartate is first activated by ATP to form Asp-AMP and then transferred to the acceptor end of tRNA(Asp/Asn). The chain is Aspartate--tRNA(Asp/Asn) ligase from Opitutus terrae (strain DSM 11246 / JCM 15787 / PB90-1).